Reading from the N-terminus, the 68-residue chain is Coiled-coil domain-containing protein 179 (68 aa).

Residues Ser-11–Ser-68 are disordered. Basic and acidic residues predominate over residues Pro-18–Glu-28. Residues Thr-27–Phe-53 are a coiled coil. Residues His-41–Ser-54 are compositionally biased toward basic residues.

This is Coiled-coil domain-containing protein 179 (CCDC179) from Homo sapiens (Human).